We begin with the raw amino-acid sequence, 244 residues long: Flagellar L-ring protein (244 aa).

The N-terminal stretch at 1 to 18 is a signal peptide; it reads MNMRVFIFLIFAAASVSA. Cys19 carries the N-palmitoyl cysteine lipid modification. Cys19 is lipidated: S-diacylglycerol cysteine.

This sequence belongs to the FlgH family. In terms of assembly, the basal body constitutes a major portion of the flagellar organelle and consists of four rings (L,P,S, and M) mounted on a central rod.

It localises to the cell outer membrane. Its subcellular location is the bacterial flagellum basal body. Its function is as follows. Assembles around the rod to form the L-ring and probably protects the motor/basal body from shearing forces during rotation. This chain is Flagellar L-ring protein, found in Jannaschia sp. (strain CCS1).